Consider the following 276-residue polypeptide: MLMITSFTNPRVAQAFVDYMATQGVVLTLQQHTQTDVWLADESQAERVNAELARFLENPGDPRYLAASWTNGHMDSGLHYQRFPFFATVRERAGPFTLLLMAACILVFIIMNVVGDQRVMIALAWPYGPAVQYDVWRYFTHALMHFSVLHILFNLLWWWYLGGAVEKRLGSGKLIVITIISALLSGYVQHKFSGPWFGGLSGVVYALMGYAWLRGERDPESGIYMQRGLITFALLWLIAGWFDLFGMSIANGAHVTGLAVGLAMAFADTLNARKRT.

6 helical membrane passes run 94-114, 142-162, 169-189, 192-212, 229-249, and 250-270; these read GPFTLLLMAACILVFIIMNVV, ALMHFSVLHILFNLLWWWYLG, LGSGKLIVITIISALLSGYVQ, FSGPWFGGLSGVVYALMGYAW, LITFALLWLIAGWFDLFGMSI, and ANGAHVTGLAVGLAMAFADTL. The active-site Nucleophile is the Ser201. His254 is a catalytic residue.

The protein belongs to the peptidase S54 family.

Its subcellular location is the cell inner membrane. The enzyme catalyses Cleaves type-1 transmembrane domains using a catalytic dyad composed of serine and histidine that are contributed by different transmembrane domains.. Functionally, rhomboid-type serine protease that catalyzes intramembrane proteolysis. This Enterobacter sp. (strain 638) protein is Rhomboid protease GlpG.